The primary structure comprises 189 residues: Peptidyl-tRNA hydrolase (189 aa).

Tyr-14 serves as a coordination point for tRNA. His-19 functions as the Proton acceptor in the catalytic mechanism. The tRNA site is built by Tyr-64, Asn-66, and Asn-112.

The protein belongs to the PTH family. In terms of assembly, monomer.

Its subcellular location is the cytoplasm. It carries out the reaction an N-acyl-L-alpha-aminoacyl-tRNA + H2O = an N-acyl-L-amino acid + a tRNA + H(+). Its function is as follows. Hydrolyzes ribosome-free peptidyl-tRNAs (with 1 or more amino acids incorporated), which drop off the ribosome during protein synthesis, or as a result of ribosome stalling. In terms of biological role, catalyzes the release of premature peptidyl moieties from peptidyl-tRNA molecules trapped in stalled 50S ribosomal subunits, and thus maintains levels of free tRNAs and 50S ribosomes. The polypeptide is Peptidyl-tRNA hydrolase (Clostridium botulinum (strain Langeland / NCTC 10281 / Type F)).